We begin with the raw amino-acid sequence, 449 residues long: Glutamyl-tRNA reductase (449 aa).

Residues 58–61 (TCNR), Ser-121, 126–128 (ETQ), and Gln-132 each bind substrate. Catalysis depends on Cys-59, which acts as the Nucleophile. 203–208 (GLGEMA) is an NADP(+) binding site.

The protein belongs to the glutamyl-tRNA reductase family. Homodimer.

The catalysed reaction is (S)-4-amino-5-oxopentanoate + tRNA(Glu) + NADP(+) = L-glutamyl-tRNA(Glu) + NADPH + H(+). It participates in porphyrin-containing compound metabolism; protoporphyrin-IX biosynthesis; 5-aminolevulinate from L-glutamyl-tRNA(Glu): step 1/2. Functionally, catalyzes the NADPH-dependent reduction of glutamyl-tRNA(Glu) to glutamate 1-semialdehyde (GSA). The sequence is that of Glutamyl-tRNA reductase from Helicobacter pylori (strain ATCC 700392 / 26695) (Campylobacter pylori).